The following is a 140-amino-acid chain: uncharacterized protein (140 aa).

Asn-27 is a glycosylation site (N-linked (GlcNAc...) asparagine). The next 3 helical transmembrane spans lie at 45–65 (FSLY…GVYA), 76–96 (VWIF…TGTV), and 116–136 (VPLC…YSMV).

It belongs to the TMEM170 family.

Its subcellular location is the membrane. This is an uncharacterized protein from Saccharomyces cerevisiae (strain ATCC 204508 / S288c) (Baker's yeast).